The primary structure comprises 511 residues: Phospho-2-dehydro-3-deoxyheptonate aldolase 1, chloroplastic (511 aa).

The transit peptide at Met-1–Ala-49 directs the protein to the chloroplast.

It belongs to the class-II DAHP synthase family. In terms of tissue distribution, higher levels seen in the cotyledons than in the leaves and flowers. Lower levels seen in the roots and stems.

The protein resides in the plastid. It localises to the chloroplast. It catalyses the reaction D-erythrose 4-phosphate + phosphoenolpyruvate + H2O = 7-phospho-2-dehydro-3-deoxy-D-arabino-heptonate + phosphate. Its pathway is metabolic intermediate biosynthesis; chorismate biosynthesis; chorismate from D-erythrose 4-phosphate and phosphoenolpyruvate: step 1/7. In terms of biological role, may be involved in the synthesis of secondary metabolites derived from intermediates of the pre-chorismate pathway up to shikimate. The protein is Phospho-2-dehydro-3-deoxyheptonate aldolase 1, chloroplastic of Solanum lycopersicum (Tomato).